Reading from the N-terminus, the 130-residue chain is RutC family protein in leuC 5'region (130 aa).

The protein belongs to the RutC family.

The chain is RutC family protein in leuC 5'region from Leuconostoc mesenteroides subsp. cremoris.